Reading from the N-terminus, the 410-residue chain is Multifunctional CCA protein (410 aa).

2 residues coordinate ATP: glycine 8 and arginine 11. Residues glycine 8 and arginine 11 each contribute to the CTP site. Residues glutamate 21 and aspartate 23 each contribute to the Mg(2+) site. 3 residues coordinate ATP: arginine 91, arginine 137, and arginine 140. Residues arginine 91, arginine 137, and arginine 140 each coordinate CTP. Residues 228–329 (TGVHVLSVLR…LELLQRFDVF (102 aa)) form the HD domain.

Belongs to the tRNA nucleotidyltransferase/poly(A) polymerase family. Bacterial CCA-adding enzyme type 1 subfamily. Monomer. Can also form homodimers and oligomers. Requires Mg(2+) as cofactor. Ni(2+) is required as a cofactor.

The enzyme catalyses a tRNA precursor + 2 CTP + ATP = a tRNA with a 3' CCA end + 3 diphosphate. It catalyses the reaction a tRNA with a 3' CCA end + 2 CTP + ATP = a tRNA with a 3' CCACCA end + 3 diphosphate. In terms of biological role, catalyzes the addition and repair of the essential 3'-terminal CCA sequence in tRNAs without using a nucleic acid template. Adds these three nucleotides in the order of C, C, and A to the tRNA nucleotide-73, using CTP and ATP as substrates and producing inorganic pyrophosphate. tRNA 3'-terminal CCA addition is required both for tRNA processing and repair. Also involved in tRNA surveillance by mediating tandem CCA addition to generate a CCACCA at the 3' terminus of unstable tRNAs. While stable tRNAs receive only 3'-terminal CCA, unstable tRNAs are marked with CCACCA and rapidly degraded. The protein is Multifunctional CCA protein of Ectopseudomonas mendocina (strain ymp) (Pseudomonas mendocina).